The following is a 654-amino-acid chain: DNA-directed RNA polymerase III subunit RPC3 (654 aa).

Thr-27 is subject to Phosphothreonine. 2 disordered regions span residues 381 to 401 (LSRK…ASLP) and 422 to 448 (KSLQ…EDPH). Phosphoserine occurs at positions 392 and 394. Residues 429 to 444 (DTQEEDEEEEDLDADT) show a composition bias toward acidic residues. Residues 581-602 (LEWNMANLLFKKEKLKQENSTL) are leucine-zipper.

The protein belongs to the RNA polymerase beta chain family. In terms of assembly, component of the RNA polymerase III (Pol III) complex consisting of 17 subunits.

It localises to the cytoplasm. The protein localises to the nucleus. Functionally, DNA-dependent RNA polymerase catalyzes the transcription of DNA into RNA using the four ribonucleoside triphosphates as substrates. Specific core component of RNA polymerase III which synthesizes small RNAs, such as 5S rRNA and tRNAs. The protein is DNA-directed RNA polymerase III subunit RPC3 (RPC82) of Saccharomyces cerevisiae (strain YJM789) (Baker's yeast).